A 565-amino-acid polypeptide reads, in one-letter code: MLKKIGNDLSFFTGYLTFRTYDSIWRKATLPMYSKLKENLRKPTKTCLPQNDLDYRLRHTLIRQNARHYQSIKNTFINIPTFELNTFLKKEFHSNIILASPTLSFSILDYLNDGRIINSDKDIRKIVKKFRLIDSMTRLTDYNAYQLNPAIDILKILDDNTRNKLLGLFDDAIFYSLDIESFVTNFSDKKYYFQDCEAINKQFNYDVYGLYVPYDDNGKKRLQIETIILVDRRTDNTKTYVFQSNFSQWEIIRNNYINWTRTMSSVYEHQLGSNVYCQNTLYHMRKTLAKTHPITVLMKPFMEGVYFTNKVFTSFGISIADTENEVVNRYMDRVELFDLSNQTMIQALEYIHKTDGYKLLDYKKVYHENGVDDIYFEQKQLLEDLYQIVFDLVTNVFEYYYQSTDDYVKDNELRDFYLSIKNDLTFVEDLQQKDNAIKFFSNIIFLSSIRHSKNHINYAYLNSFYDYALRKTNFDLLLDKLDNGIPFDEKDCLSTVGDFYSKYSSGIYPSVPINLFGTGYKNLFADNEVQKFFTDVTNKLNQLKKNTERNNYTEFLFRLQNSNTI.

This is an uncharacterized protein from Acanthamoeba polyphaga (Amoeba).